The following is a 106-amino-acid chain: Small ribosomal subunit protein mS33 (106 aa).

N-acetylserine is present on S2. The disordered stretch occupies residues 81-106; it reads EQRRLKKLRGKGKPRKGEGKRATKKK. The span at 84 to 94 shows a compositional bias: basic residues; the sequence is RLKKLRGKGKP. The span at 95 to 106 shows a compositional bias: basic and acidic residues; sequence RKGEGKRATKKK.

It belongs to the mitochondrion-specific ribosomal protein mS33 family. Component of the mitochondrial ribosome small subunit (28S) which comprises a 12S rRNA and about 30 distinct proteins.

The protein localises to the mitochondrion. The polypeptide is Small ribosomal subunit protein mS33 (Mrps33) (Mus musculus (Mouse)).